We begin with the raw amino-acid sequence, 334 residues long: Ornithine carbamoyltransferase (334 aa).

Carbamoyl phosphate-binding positions include 57–60 (STRT), Q84, R108, and 135–138 (HPTQ). Residues N169, D233, and 237 to 238 (SM) each bind L-ornithine. Carbamoyl phosphate is bound by residues 275 to 276 (CL) and R320.

The protein belongs to the aspartate/ornithine carbamoyltransferase superfamily. OTCase family.

It is found in the cytoplasm. The enzyme catalyses carbamoyl phosphate + L-ornithine = L-citrulline + phosphate + H(+). The protein operates within amino-acid biosynthesis; L-arginine biosynthesis; L-arginine from L-ornithine and carbamoyl phosphate: step 1/3. Its function is as follows. Reversibly catalyzes the transfer of the carbamoyl group from carbamoyl phosphate (CP) to the N(epsilon) atom of ornithine (ORN) to produce L-citrulline. This is Ornithine carbamoyltransferase from Aeromonas hydrophila subsp. hydrophila (strain ATCC 7966 / DSM 30187 / BCRC 13018 / CCUG 14551 / JCM 1027 / KCTC 2358 / NCIMB 9240 / NCTC 8049).